The following is an 81-amino-acid chain: Conotoxin ArMKLT2-0311 (81 aa).

The N-terminal stretch at 1 to 22 (MKLTCVLIVALLFLTACQLTTA) is a signal peptide. Basic and acidic residues predominate over residues 23–34 (DDSRDKQEDPLV). Residues 23 to 45 (DDSRDKQEDPLVRSHRKMQKSED) form a disordered region. Residues 23–51 (DDSRDKQEDPLVRSHRKMQKSEDPKMAER) constitute a propeptide that is removed on maturation. 3 disulfides stabilise this stretch: cysteine 52–cysteine 67, cysteine 59–cysteine 71, and cysteine 66–cysteine 80.

The protein belongs to the conotoxin O1 superfamily. As to expression, expressed by the venom duct.

It localises to the secreted. The protein is Conotoxin ArMKLT2-0311 of Conus arenatus (Sand-dusted cone).